The sequence spans 253 residues: uncharacterized protein (253 aa).

A signal peptide spans 1-19 (MRYLKKVTIYISLLILVSG). Cys-20 is lipidated: N-palmitoyl cysteine. Cys-20 carries the S-diacylglycerol cysteine lipid modification.

The protein belongs to the staphylococcal tandem lipoprotein family.

The protein resides in the cell membrane. This is an uncharacterized protein from Staphylococcus epidermidis (strain ATCC 35984 / DSM 28319 / BCRC 17069 / CCUG 31568 / BM 3577 / RP62A).